A 462-amino-acid polypeptide reads, in one-letter code: Elongation factor 1-alpha 1 (462 aa).

G2 carries the n,N,N-trimethylglycine modification. Positions 5 to 242 constitute a tr-type G domain; sequence KTHINIVVIG…DCILPPTRPT (238 aa). A G1 region spans residues 14-21; that stretch reads GHVDSGKS. Residue 14–21 participates in GTP binding; sequence GHVDSGKS. The G2 stretch occupies residues 70-74; sequence GITID. The segment at 91–94 is G3; the sequence is DAPG. Residues 153 to 156 and 194 to 196 contribute to the GTP site; these read NKMD and SGW. Residues 153-156 form a G4 region; sequence NKMD. A G5 region spans residues 194–196; that stretch reads SGW. A 5-glutamyl glycerylphosphorylethanolamine mark is found at E301 and E374.

This sequence belongs to the TRAFAC class translation factor GTPase superfamily. Classic translation factor GTPase family. EF-Tu/EF-1A subfamily.

The protein localises to the cytoplasm. It catalyses the reaction GTP + H2O = GDP + phosphate + H(+). Functionally, translation elongation factor that catalyzes the GTP-dependent binding of aminoacyl-tRNA (aa-tRNA) to the A-site of ribosomes during the elongation phase of protein synthesis. Base pairing between the mRNA codon and the aa-tRNA anticodon promotes GTP hydrolysis, releasing the aa-tRNA from EEF1A1 and allowing its accommodation into the ribosome. The growing protein chain is subsequently transferred from the P-site peptidyl tRNA to the A-site aa-tRNA, extending it by one amino acid through ribosome-catalyzed peptide bond formation. The polypeptide is Elongation factor 1-alpha 1 (EEF1A) (Gallus gallus (Chicken)).